The primary structure comprises 157 residues: Nascent polypeptide-associated complex subunit beta (157 aa).

A disordered region spans residues 1-31 (MPVDPEKLAKLQKSTAKKVGGSRVKAKKGVK). Positions 33–98 (EQDDTKLIET…PQEKNITQLI (66 aa)) constitute an NAC-A/B domain. The segment at 125–157 (NPKDFGAAGEAGATEEANEDIPDLVDQKFDDVE) is disordered. Low complexity predominate over residues 130 to 139 (GAAGEAGATE).

Belongs to the NAC-beta family. Part of the nascent polypeptide-associated complex (NAC), consisting of EGD2 and EGD1. NAC associates with ribosomes via EGD1.

The protein resides in the cytoplasm. The protein localises to the nucleus. Functionally, component of the nascent polypeptide-associated complex (NAC), a dynamic component of the ribosomal exit tunnel, protecting the emerging polypeptides from interaction with other cytoplasmic proteins to ensure appropriate nascent protein targeting. The NAC complex also promotes mitochondrial protein import by enhancing productive ribosome interactions with the outer mitochondrial membrane and blocks the inappropriate interaction of ribosomes translating non-secretory nascent polypeptides with translocation sites in the membrane of the endoplasmic reticulum. EGD1 may act as a transcription factor that exert a negative effect on the expression of several genes that are transcribed by RNA polymerase II. This Lodderomyces elongisporus (strain ATCC 11503 / CBS 2605 / JCM 1781 / NBRC 1676 / NRRL YB-4239) (Yeast) protein is Nascent polypeptide-associated complex subunit beta (EGD1).